We begin with the raw amino-acid sequence, 339 residues long: tRNA N6-adenosine threonylcarbamoyltransferase (339 aa).

Residues His114 and His118 each coordinate Fe cation. Substrate contacts are provided by residues 137–141 (VVSGG), Asp170, Gly183, Asp187, and Asn277. Residue Asp305 participates in Fe cation binding.

The protein belongs to the KAE1 / TsaD family. It depends on Fe(2+) as a cofactor.

Its subcellular location is the cytoplasm. The enzyme catalyses L-threonylcarbamoyladenylate + adenosine(37) in tRNA = N(6)-L-threonylcarbamoyladenosine(37) in tRNA + AMP + H(+). Its function is as follows. Required for the formation of a threonylcarbamoyl group on adenosine at position 37 (t(6)A37) in tRNAs that read codons beginning with adenine. Is involved in the transfer of the threonylcarbamoyl moiety of threonylcarbamoyl-AMP (TC-AMP) to the N6 group of A37, together with TsaE and TsaB. TsaD likely plays a direct catalytic role in this reaction. This chain is tRNA N6-adenosine threonylcarbamoyltransferase, found in Clostridium perfringens (strain ATCC 13124 / DSM 756 / JCM 1290 / NCIMB 6125 / NCTC 8237 / Type A).